Reading from the N-terminus, the 333-residue chain is Tetraacyldisaccharide 4'-kinase (333 aa).

60–67 (TVGGTGKT) provides a ligand contact to ATP.

The protein belongs to the LpxK family.

The catalysed reaction is a lipid A disaccharide + ATP = a lipid IVA + ADP + H(+). The protein operates within glycolipid biosynthesis; lipid IV(A) biosynthesis; lipid IV(A) from (3R)-3-hydroxytetradecanoyl-[acyl-carrier-protein] and UDP-N-acetyl-alpha-D-glucosamine: step 6/6. Its function is as follows. Transfers the gamma-phosphate of ATP to the 4'-position of a tetraacyldisaccharide 1-phosphate intermediate (termed DS-1-P) to form tetraacyldisaccharide 1,4'-bis-phosphate (lipid IVA). The chain is Tetraacyldisaccharide 4'-kinase from Ectopseudomonas mendocina (strain ymp) (Pseudomonas mendocina).